We begin with the raw amino-acid sequence, 426 residues long: Squamosa promoter-binding-like protein 10 (426 aa).

Residues 178–255 form an SBP-type zinc finger; that stretch reads PPRCQAEGCK…AEHNRRRRKP (78 aa). Residues C181, C186, C203, H206, C222, C225, H229, and C241 each coordinate Zn(2+). Residues 238–254 carry the Bipartite nuclear localization signal motif; the sequence is KRSCRKRLAEHNRRRRK. Low complexity-rich tracts occupy residues 268-287 and 401-417; these read DAAA…AATS and SDQN…NNNN. 2 disordered regions span residues 268 to 290 and 392 to 426; these read DAAA…SYTG and PSTA…VDFM.

As to expression, expressed in stems, leaf sheaths, and young panicles.

It localises to the nucleus. Its function is as follows. Trans-acting factor that binds specifically to the consensus nucleotide sequence 5'-TNCGTACAA-3'. This chain is Squamosa promoter-binding-like protein 10 (SPL10), found in Oryza sativa subsp. indica (Rice).